A 75-amino-acid polypeptide reads, in one-letter code: Putative DNA-directed RNA polymerase subunit omega (75 aa).

It belongs to the RNA polymerase subunit omega family.

The protein localises to the plastid. It localises to the chloroplast. It catalyses the reaction RNA(n) + a ribonucleoside 5'-triphosphate = RNA(n+1) + diphosphate. Its function is as follows. May be involved in RNA polymerase activity. The chain is Putative DNA-directed RNA polymerase subunit omega (rpoZ) from Porphyra purpurea (Red seaweed).